A 274-amino-acid chain; its full sequence is MEFLTSGKVKDLYDVDESTLLFKFSDRVSAYDVKFKQDIPRKGEVLCKFAEFWFNELDVPNHFIKRESENEILVKKMKMLPIECVVRGYFYGSLVSRWKKGEVQVPEGTNTTLAAQLPEPIFDPTTKSEHDIPIDKNKAIEMNLVSEEQYNWLEKTSIEIYKKMAKITDDVGFILADLKLEFGILDDQITLGDSIGPDEYRLWPKDSFEVGKIQEAYDKQLLRDWLTANGYQKQFDDARDNGQEPIPPNIPSEIISKMTERYVTAYEKISGKSL.

It belongs to the SAICAR synthetase family.

The catalysed reaction is 5-amino-1-(5-phospho-D-ribosyl)imidazole-4-carboxylate + L-aspartate + ATP = (2S)-2-[5-amino-1-(5-phospho-beta-D-ribosyl)imidazole-4-carboxamido]succinate + ADP + phosphate + 2 H(+). Its pathway is purine metabolism; IMP biosynthesis via de novo pathway; 5-amino-1-(5-phospho-D-ribosyl)imidazole-4-carboxamide from 5-amino-1-(5-phospho-D-ribosyl)imidazole-4-carboxylate: step 1/2. The sequence is that of Phosphoribosylaminoimidazole-succinocarboxamide synthase from Nitrosopumilus maritimus (strain SCM1).